Reading from the N-terminus, the 265-residue chain is ATP synthase subunit a (265 aa).

A run of 5 helical transmembrane segments spans residues 25 to 45 (FWAV…LFLW), 88 to 108 (IAPL…MDLI), 142 to 162 (DLNT…IYSI), 207 to 227 (LFGN…IGFW), and 233 to 253 (FAWA…FMML).

Belongs to the ATPase A chain family. In terms of assembly, F-type ATPases have 2 components, CF(1) - the catalytic core - and CF(0) - the membrane proton channel. CF(1) has five subunits: alpha(3), beta(3), gamma(1), delta(1), epsilon(1). CF(0) has three main subunits: a(1), b(2) and c(9-12). The alpha and beta chains form an alternating ring which encloses part of the gamma chain. CF(1) is attached to CF(0) by a central stalk formed by the gamma and epsilon chains, while a peripheral stalk is formed by the delta and b chains.

The protein localises to the cell inner membrane. Key component of the proton channel; it plays a direct role in the translocation of protons across the membrane. This Idiomarina loihiensis (strain ATCC BAA-735 / DSM 15497 / L2-TR) protein is ATP synthase subunit a.